The primary structure comprises 387 residues: 1-deoxy-D-xylulose 5-phosphate reductoisomerase (387 aa).

NADPH is bound by residues T10, G11, I13, N38, and N122. K123 lines the 1-deoxy-D-xylulose 5-phosphate pocket. E124 contributes to the NADPH binding site. D148 is a binding site for Mn(2+). 1-deoxy-D-xylulose 5-phosphate is bound by residues S149, E150, S174, and H197. A Mn(2+)-binding site is contributed by E150. G203 lines the NADPH pocket. 4 residues coordinate 1-deoxy-D-xylulose 5-phosphate: S210, N215, K216, and E219. E219 contacts Mn(2+).

It belongs to the DXR family. Mg(2+) serves as cofactor. Requires Mn(2+) as cofactor.

It catalyses the reaction 2-C-methyl-D-erythritol 4-phosphate + NADP(+) = 1-deoxy-D-xylulose 5-phosphate + NADPH + H(+). Its pathway is isoprenoid biosynthesis; isopentenyl diphosphate biosynthesis via DXP pathway; isopentenyl diphosphate from 1-deoxy-D-xylulose 5-phosphate: step 1/6. Its function is as follows. Catalyzes the NADPH-dependent rearrangement and reduction of 1-deoxy-D-xylulose-5-phosphate (DXP) to 2-C-methyl-D-erythritol 4-phosphate (MEP). This chain is 1-deoxy-D-xylulose 5-phosphate reductoisomerase, found in Ehrlichia ruminantium (strain Gardel).